A 328-amino-acid chain; its full sequence is DNA-directed RNA polymerase subunit alpha (328 aa).

Residues 1 to 234 form an alpha N-terminal domain (alpha-NTD) region; that stretch reads MQTAVNEFLT…QQLAVFVDLE (234 aa). An alpha C-terminal domain (alpha-CTD) region spans residues 248–328; that stretch reads IDPILLRPVD…NWPPASLKND (81 aa).

Belongs to the RNA polymerase alpha chain family. In terms of assembly, homodimer. The RNAP catalytic core consists of 2 alpha, 1 beta, 1 beta' and 1 omega subunit. When a sigma factor is associated with the core the holoenzyme is formed, which can initiate transcription.

The enzyme catalyses RNA(n) + a ribonucleoside 5'-triphosphate = RNA(n+1) + diphosphate. In terms of biological role, DNA-dependent RNA polymerase catalyzes the transcription of DNA into RNA using the four ribonucleoside triphosphates as substrates. This Cellvibrio japonicus (strain Ueda107) (Pseudomonas fluorescens subsp. cellulosa) protein is DNA-directed RNA polymerase subunit alpha.